The primary structure comprises 281 residues: Homoserine kinase (281 aa).

An ATP-binding site is contributed by 83–93 (PVSSGLGSSAA).

Belongs to the GHMP kinase family. Homoserine kinase subfamily.

It is found in the cytoplasm. The enzyme catalyses L-homoserine + ATP = O-phospho-L-homoserine + ADP + H(+). It participates in amino-acid biosynthesis; L-threonine biosynthesis; L-threonine from L-aspartate: step 4/5. In terms of biological role, catalyzes the ATP-dependent phosphorylation of L-homoserine to L-homoserine phosphate. The protein is Homoserine kinase of Thermotoga petrophila (strain ATCC BAA-488 / DSM 13995 / JCM 10881 / RKU-1).